A 248-amino-acid chain; its full sequence is 21S rRNA pseudouridine(2819) synthase (248 aa).

Residue D58 is part of the active site.

This sequence belongs to the pseudouridine synthase RluA family.

It is found in the mitochondrion. It carries out the reaction uridine(2819) in 21S rRNA = pseudouridine(2819) in 21S rRNA. Functionally, pseudouridylate synthase responsible for the pseudouridine-2819 formation in mitochondrial 21S rRNA. May modulate the efficiency or the fidelity of the mitochondrial translation machinery. The sequence is that of 21S rRNA pseudouridine(2819) synthase (PUS5) from Candida albicans (strain SC5314 / ATCC MYA-2876) (Yeast).